We begin with the raw amino-acid sequence, 550 residues long: Small ribosomal subunit protein uS3m (550 aa).

Residues 112–133 (NDDTEEERNEVGGRGAGKRVES) are disordered.

It belongs to the universal ribosomal protein uS3 family.

The protein resides in the mitochondrion. This chain is Small ribosomal subunit protein uS3m (RPS3), found in Oenothera berteroana (Bertero's evening primrose).